The sequence spans 450 residues: UDP-N-acetylmuramoylalanine--D-glutamate ligase (450 aa).

115 to 121 (GTNGKTT) is an ATP binding site.

Belongs to the MurCDEF family.

Its subcellular location is the cytoplasm. The enzyme catalyses UDP-N-acetyl-alpha-D-muramoyl-L-alanine + D-glutamate + ATP = UDP-N-acetyl-alpha-D-muramoyl-L-alanyl-D-glutamate + ADP + phosphate + H(+). The protein operates within cell wall biogenesis; peptidoglycan biosynthesis. In terms of biological role, cell wall formation. Catalyzes the addition of glutamate to the nucleotide precursor UDP-N-acetylmuramoyl-L-alanine (UMA). This is UDP-N-acetylmuramoylalanine--D-glutamate ligase from Desulfatibacillum aliphaticivorans.